Consider the following 188-residue polypeptide: Josephin-2 (188 aa).

In terms of domain architecture, Josephin spans 11 to 188; it reads PPTVYHERQR…EEKGSWLRTD (178 aa). Cys24 acts as the Nucleophile in catalysis. The active-site Proton acceptor is His125.

It localises to the cytoplasm. It is found in the cytosol. It carries out the reaction Thiol-dependent hydrolysis of ester, thioester, amide, peptide and isopeptide bonds formed by the C-terminal Gly of ubiquitin (a 76-residue protein attached to proteins as an intracellular targeting signal).. Its function is as follows. Cleaves 'Lys-63'-linked poly-ubiquitin chains, and with lesser efficiency 'Lys-48'-linked poly-ubiquitin chains (in vitro). May act as a deubiquitinating enzyme. This chain is Josephin-2 (JOSD2), found in Homo sapiens (Human).